Consider the following 404-residue polypeptide: Argininosuccinate synthase (404 aa).

ATP contacts are provided by residues 10–18 and Ala-38; that span reads AYSGGVDTS. Tyr-89 contributes to the L-citrulline binding site. ATP is bound at residue Gly-119. L-aspartate-binding residues include Thr-121, Asn-125, and Asp-126. L-citrulline is bound at residue Asn-125. L-citrulline contacts are provided by Arg-129, Ser-177, Ser-186, Glu-262, and Tyr-274.

It belongs to the argininosuccinate synthase family. Type 1 subfamily. In terms of assembly, homotetramer.

It is found in the cytoplasm. It catalyses the reaction L-citrulline + L-aspartate + ATP = 2-(N(omega)-L-arginino)succinate + AMP + diphosphate + H(+). It functions in the pathway amino-acid biosynthesis; L-arginine biosynthesis; L-arginine from L-ornithine and carbamoyl phosphate: step 2/3. The polypeptide is Argininosuccinate synthase (Prochlorococcus marinus (strain MIT 9215)).